Consider the following 280-residue polypeptide: Ribonuclease Z (280 aa).

7 residues coordinate Zn(2+): His61, His63, Asp65, His66, His153, Asp176, and His240. The Proton acceptor role is filled by Asp65.

The protein belongs to the RNase Z family. In terms of assembly, homodimer. Zn(2+) is required as a cofactor.

It carries out the reaction Endonucleolytic cleavage of RNA, removing extra 3' nucleotides from tRNA precursor, generating 3' termini of tRNAs. A 3'-hydroxy group is left at the tRNA terminus and a 5'-phosphoryl group is left at the trailer molecule.. In terms of biological role, zinc phosphodiesterase, which displays some tRNA 3'-processing endonuclease activity. Probably involved in tRNA maturation, by removing a 3'-trailer from precursor tRNA. The sequence is that of Ribonuclease Z from Mycobacterium bovis (strain BCG / Pasteur 1173P2).